A 163-amino-acid chain; its full sequence is MKYLLISLALWLGMVGIHGTELELSETQRRGLQVALEEFHKHPPVQWAFQEIGVDNANDMVFSAGTFVRLEFKLQQTSCFKKDWKNPECKIKANGRKRKCLACIKLDPRGKVLGRMVHCPILKQGLQQELQESQCNRITQAGEDPRSHFFPGQFAFSRALKHK.

Residues 1-20 (MKYLLISLALWLGMVGIHGT) form the signal peptide. Intrachain disulfides connect Cys-79/Cys-89, Cys-100/Cys-119, and Cys-103/Cys-135. Residues 158–163 (RALKHK) constitute a propeptide that is removed on maturation.

Secreted in an inactive precursor form, prochemerin, which is proteolytically processed by a variety of extracellular proteases to generate forms with differing levels of bioactivity. For example, the removal of six amino acids results in chemerin-157, which exhibits the highest activity, while removal of seven amino acids results in chemerin-156 which has slightly less activity. Some proteases are able to cleave at more than one site and chemerin forms may be sequentially processed by different enzymes to modulate activity levels. The coordinated expression and activity of chemerin-modifying enzymes is essential for regulating its bioactivation, inactivation and, consequently, biological function. Cathepsin G cleaves seven C-terminal amino acids from prochemerin (chemerin-156), elastase is able to cleave six (chemerin-157), eight (chemerin-155) or eleven (chemerin-152), plasmin cleaves five amino acids (chemerin-158), and tryptase cleaves five (chemerin-158) or eight (chemerin-155). Multiple cleavages might be required to fully activate chemerin, with an initial tryptase cleavage resulting in chemerin with low activity (chemerin-158), and a second cleavage by carboxypeptidase N or B producing highly active chemerin (chemerin-157).

Its subcellular location is the secreted. In terms of biological role, adipocyte-secreted protein (adipokine) that regulates adipogenesis, metabolism and inflammation through activation of the chemokine-like receptor 1 (CMKLR1). Also acts as a ligand for CMKLR2. Can also bind to C-C chemokine receptor-like 2 (CCRL2), but with a lower affinity than it does to CMKLR1 or CMKLR2. Positively regulates adipocyte differentiation, modulates the expression of adipocyte genes involved in lipid and glucose metabolism and might play a role in angiogenesis, a process essential for the expansion of white adipose tissue. Also acts as a pro-inflammatory adipokine, causing an increase in secretion of pro-inflammatory and prodiabetic adipokines, which further impair adipose tissue metabolic function and have negative systemic effects including impaired insulin sensitivity, altered glucose and lipid metabolism, and a decrease in vascular function in other tissues. Can have both pro- and anti-inflammatory properties depending on the modality of enzymatic cleavage by different classes of proteases. Acts as a chemotactic factor for leukocyte populations expressing CMKLR1, particularly immature plasmacytoid dendritic cells, but also immature myeloid DCs, macrophages and natural killer cells. Exerts an anti-inflammatory role by preventing TNF/TNFA-induced VCAM1 expression and monocytes adhesion in vascular endothelial cells. The effect is mediated via inhibiting activation of NF-kappa-B and CRK/p38 through stimulation of AKT1/NOS3 signaling and nitric oxide production. Its dual role in inflammation and metabolism might provide a link Exhibits an antimicrobial function in the skin. In Cricetulus griseus (Chinese hamster), this protein is Retinoic acid receptor responder protein 2 (RARRES2).